The chain runs to 946 residues: Histone-lysine N-methyltransferase, H3 lysine-79 specific (946 aa).

A compositionally biased stretch (basic and acidic residues) spans 1–18; the sequence is MSEADAGARDESPSRTAE. The segment at 1 to 28 is disordered; sequence MSEADAGARDESPSRTAEEPAAAMRIKE. Positions 54–369 constitute a DOT1 domain; the sequence is QGKTLRLPGN…KLIKYYEDQR (316 aa). Residues 173 to 176, 196 to 205, Glu223, and 259 to 260 contribute to the S-adenosyl-L-methionine site; these read YGET, FVDLGSGIGQ, and DF. The segment covering 368–409 has biased composition (basic and acidic residues); the sequence is QRRRQEVKSSREGSEISDGRDMGLKKRKSQRESSVHPDKLQK. Disordered stretches follow at residues 368-577 and 849-905; these read QRRR…HGGG and PTAS…GATE. Over residues 410–422 the composition is skewed to polar residues; it reads TEQAAASSHQSPK. Residues 464 to 484 are compositionally biased toward basic and acidic residues; it reads GKDREKEKEKKKNKIYEEKKV. 3 stretches are compositionally biased toward low complexity: residues 491–502, 512–528, and 855–864; these read KSSSSRYSSETP, NSIS…QPKA, and SKVSPSSSSS. Over residues 880 to 903 the composition is skewed to gly residues; it reads GAGGGGKRGTSGGRKSDGGGGGGA.

The protein belongs to the class I-like SAM-binding methyltransferase superfamily. DOT1 family. As to quaternary structure, interacts with zfp-1 (via C-terminus) to form a heterodimer known as the zfp-1-dot-1.1 complex or DotCom complex.

The protein resides in the nucleus. The protein localises to the chromosome. The catalysed reaction is L-lysyl(79)-[histone H3] + 3 S-adenosyl-L-methionine = N(6),N(6),N(6)-trimethyl-L-lysyl(79)-[histone H3] + 3 S-adenosyl-L-homocysteine + 3 H(+). Functionally, histone methyltransferase, which in complex with zfp-1, methylates 'Lys-79' of histone H3 to activate transcription. During stress, the zfp-1-dot-1.1 complex also plays a role in the deubiquitination of histone H2B sites, which negatively modulates the RNA polymerase II-induced transcription of highly expressed genes. Involved in controlling tissue-specific gene expression, particularly in the epidermis. The sequence is that of Histone-lysine N-methyltransferase, H3 lysine-79 specific from Caenorhabditis elegans.